The sequence spans 517 residues: MMLSVFGLSVPISATELLLASFVFCLVFWVVRAWQPRVPKGLKSPPGPWGWPLLGHVLTLGKNPHLVLARLSQHYGDVLQIRIGSTPVLVLSGLDTIRQALVRQGDDFKGRPNLYSFTLISEGQSMSFSPDSGPVWAARRRLAQNALKSFSIASDPASSSSCYLEDHVSKEAEYLIGKFQELMAKVGHFDPYRYVVVSVANVICAMCFGRRYDHDDQELLSIVNLSNEFGDGTASGNPVDFFPILRYLPNPALDFFKDVNEKFSIFIHKMVKEHYKTFEKGHIRDITDSLIEHCQDKRLDENANIQLSDEKIVNVVSDLFGAGFDTVTTAISWCLMYLVTSPNVQEKIQKELDTVIGRERQPRLSDRLQLPYMEAFILEMFRHTSFVPFTIPHSTTKDTSLSGFYIPKERCVFVNQWQINHDQKLWGDPSEFRPERFLTPDGTINKALSEKVILFGLGKRKCIGETIARLEVFLFLAILLQQVEFSVPQGTKVDMTPIYGLTMKHARCEHFQVRMRT.

The segment at 34 to 45 (WQPRVPKGLKSP) is mitochondrial targeting signal. Serine 72 carries an O-linked (GlcNAc) serine glycan. A substrate-binding site is contributed by phenylalanine 229. A heme-binding site is contributed by cysteine 462.

It belongs to the cytochrome P450 family. As to quaternary structure, interacts with cytosolic chaperones HSP70 and HSP90; this interaction is required for initial targeting to mitochondria. Interacts (via mitochondrial targeting signal) with TOMM40 (via N-terminus); this interaction is required for translocation across the mitochondrial outer membrane. It depends on heme as a cofactor.

It localises to the endoplasmic reticulum membrane. It is found in the mitochondrion inner membrane. The protein resides in the microsome membrane. The protein localises to the cytoplasm. It catalyses the reaction an organic molecule + reduced [NADPH--hemoprotein reductase] + O2 = an alcohol + oxidized [NADPH--hemoprotein reductase] + H2O + H(+). The catalysed reaction is estrone + reduced [NADPH--hemoprotein reductase] + O2 = 2-hydroxyestrone + oxidized [NADPH--hemoprotein reductase] + H2O + H(+). The enzyme catalyses estrone + reduced [NADPH--hemoprotein reductase] + O2 = 4-hydroxyestrone + oxidized [NADPH--hemoprotein reductase] + H2O + H(+). It carries out the reaction estrone + reduced [NADPH--hemoprotein reductase] + O2 = 6alpha-hydroxyestrone + oxidized [NADPH--hemoprotein reductase] + H2O + H(+). It catalyses the reaction estrone + reduced [NADPH--hemoprotein reductase] + O2 = 15alpha-hydroxyestrone + oxidized [NADPH--hemoprotein reductase] + H2O + H(+). The catalysed reaction is estrone + reduced [NADPH--hemoprotein reductase] + O2 = 16alpha-hydroxyestrone + oxidized [NADPH--hemoprotein reductase] + H2O + H(+). The enzyme catalyses 17beta-estradiol + reduced [NADPH--hemoprotein reductase] + O2 = 2-hydroxy-17beta-estradiol + oxidized [NADPH--hemoprotein reductase] + H2O + H(+). It carries out the reaction 17beta-estradiol + reduced [NADPH--hemoprotein reductase] + O2 = 4-hydroxy-17beta-estradiol + oxidized [NADPH--hemoprotein reductase] + H2O + H(+). It catalyses the reaction 17beta-estradiol + reduced [NADPH--hemoprotein reductase] + O2 = 6alpha-hydroxy-17beta-estradiol + oxidized [NADPH--hemoprotein reductase] + H2O + H(+). The catalysed reaction is 17beta-estradiol + reduced [NADPH--hemoprotein reductase] + O2 = 7alpha-hydroxy-17beta-estradiol + oxidized [NADPH--hemoprotein reductase] + H2O + H(+). The enzyme catalyses 17beta-estradiol + reduced [NADPH--hemoprotein reductase] + O2 = 15alpha-hydroxy-17beta-estradiol + oxidized [NADPH--hemoprotein reductase] + H2O + H(+). It carries out the reaction (5Z,8Z,11Z)-eicosatrienoate + reduced [NADPH--hemoprotein reductase] + O2 = 19-hydroxy-(5Z,8Z,11Z)-eicosatrienoate + oxidized [NADPH--hemoprotein reductase] + H2O + H(+). It catalyses the reaction (5Z,8Z,11Z,14Z)-eicosatetraenoate + reduced [NADPH--hemoprotein reductase] + O2 = 16-hydroxy-(5Z,8Z,11Z,14Z)-eicosatetraenoate + oxidized [NADPH--hemoprotein reductase] + H2O + H(+). The catalysed reaction is (5Z,8Z,11Z,14Z)-eicosatetraenoate + reduced [NADPH--hemoprotein reductase] + O2 = 17-hydroxy-(5Z,8Z,11Z,14Z)-eicosatetraenoate + oxidized [NADPH--hemoprotein reductase] + H2O + H(+). The enzyme catalyses (5Z,8Z,11Z,14Z)-eicosatetraenoate + reduced [NADPH--hemoprotein reductase] + O2 = 18-hydroxy-(5Z,8Z,11Z,14Z)-eicosatetraenoate + oxidized [NADPH--hemoprotein reductase] + H2O + H(+). It carries out the reaction (5Z,8Z,11Z,14Z)-eicosatetraenoate + reduced [NADPH--hemoprotein reductase] + O2 = 19-hydroxy-(5Z,8Z,11Z,14Z)-eicosatetraenoate + oxidized [NADPH--hemoprotein reductase] + H2O + H(+). It catalyses the reaction (5Z,8Z,11Z,14Z,17Z)-eicosapentaenoate + reduced [NADPH--hemoprotein reductase] + O2 = 19-hydroxy-(5Z,8Z,11Z,14Z,17Z)-eicosapentaenoate + oxidized [NADPH--hemoprotein reductase] + H2O + H(+). The catalysed reaction is (5Z,8Z,11Z,14Z)-eicosatetraenoate + reduced [NADPH--hemoprotein reductase] + O2 = (8R,9S)-epoxy-(5Z,11Z,14Z)-eicosatrienoate + oxidized [NADPH--hemoprotein reductase] + H2O + H(+). The enzyme catalyses (5Z,8Z,11Z,14Z)-eicosatetraenoate + reduced [NADPH--hemoprotein reductase] + O2 = (11R,12S)-epoxy-(5Z,8Z,14Z)-eicosatrienoate + oxidized [NADPH--hemoprotein reductase] + H2O + H(+). It carries out the reaction (5Z,8Z,11Z,14Z)-eicosatetraenoate + reduced [NADPH--hemoprotein reductase] + O2 = (14S,15R)-epoxy-(5Z,8Z,11Z)-eicosatrienoate + oxidized [NADPH--hemoprotein reductase] + H2O + H(+). It catalyses the reaction (5Z,8Z,11Z,14Z)-eicosatetraenoate + reduced [NADPH--hemoprotein reductase] + O2 = (14R,15S)-epoxy-(5Z,8Z,11Z)-eicosatrienoate + oxidized [NADPH--hemoprotein reductase] + H2O + H(+). The catalysed reaction is (5Z,8Z,11Z,14Z,17Z)-eicosapentaenoate + reduced [NADPH--hemoprotein reductase] + O2 = (17R,18S)-epoxy-(5Z,8Z,11Z,14Z)-eicosatetraenoate + oxidized [NADPH--hemoprotein reductase] + H2O + H(+). The enzyme catalyses (4Z,7Z,10Z,13Z,16Z,19Z)-docosahexaenoate + reduced [NADPH--hemoprotein reductase] + O2 = (19S,20R)-epoxy-(4Z,7Z,10Z,13Z,16Z)-docosapentaenoate + oxidized [NADPH--hemoprotein reductase] + H2O + H(+). It carries out the reaction (4Z,7Z,10Z,13Z,16Z,19Z)-docosahexaenoate + reduced [NADPH--hemoprotein reductase] + O2 = (19R,20S)-epoxy-(4Z,7Z,10Z,13Z,16Z)-docosapentaenoate + oxidized [NADPH--hemoprotein reductase] + H2O + H(+). It catalyses the reaction all-trans-retinol + reduced [NADPH--hemoprotein reductase] + O2 = all-trans-retinal + oxidized [NADPH--hemoprotein reductase] + 2 H2O + H(+). The catalysed reaction is all-trans-retinal + reduced [NADPH--hemoprotein reductase] + O2 = all-trans-retinoate + oxidized [NADPH--hemoprotein reductase] + H2O + 2 H(+). The enzyme catalyses (13S)-hydroperoxy-(9Z,11E)-octadecadienoate = 13-oxo-(9Z,11E)-octadecadienoate + H2O. It carries out the reaction (12S)-hydroperoxy-(5Z,8Z,10E,14Z)-eicosatetraenoate = 12-oxo-(5Z,8Z,10E,14Z)-eicosatetraenoate + H2O. It catalyses the reaction (15S)-hydroperoxy-(5Z,8Z,11Z,13E)-eicosatetraenoate = 15-oxo-(5Z,8Z,11Z,13E)-eicosatetraenoate + H2O. The catalysed reaction is (5S)-hydroperoxy-(6E,8Z,11Z,14Z)-eicosatetraenoate = 5-oxo-(6E,8Z,11Z,14Z)-eicosatetraenoate + H2O. It participates in steroid hormone biosynthesis. Its pathway is lipid metabolism; fatty acid metabolism. The protein operates within cofactor metabolism; retinol metabolism. In terms of biological role, a cytochrome P450 monooxygenase involved in the metabolism of various endogenous substrates, including fatty acids, steroid hormones and vitamins. Mechanistically, uses molecular oxygen inserting one oxygen atom into a substrate, and reducing the second into a water molecule, with two electrons provided by NADPH via cytochrome P450 reductase (CPR; NADPH-ferrihemoprotein reductase). Catalyzes the hydroxylation of carbon-hydrogen bonds. Exhibits high catalytic activity for the formation of hydroxyestrogens from estrone (E1) and 17beta-estradiol (E2), namely 2-hydroxy E1 and E2, as well as D-ring hydroxylated E1 and E2 at the C15alpha and C16alpha positions. Displays different regioselectivities for polyunsaturated fatty acids (PUFA) hydroxylation. Catalyzes the epoxidation of double bonds of certain PUFA. Converts arachidonic acid toward epoxyeicosatrienoic acid (EET) regioisomers, 8,9-, 11,12-, and 14,15-EET, that function as lipid mediators in the vascular system. Displays an absolute stereoselectivity in the epoxidation of eicosapentaenoic acid (EPA) producing the 17(R),18(S) enantiomer. May play an important role in all-trans retinoic acid biosynthesis in extrahepatic tissues. Catalyzes two successive oxidative transformation of all-trans retinol to all-trans retinal and then to the active form all-trans retinoic acid. May also participate in eicosanoids metabolism by converting hydroperoxide species into oxo metabolites (lipoxygenase-like reaction, NADPH-independent). This Felis catus (Cat) protein is Cytochrome P450 1A1 (CYP1A1).